A 253-amino-acid chain; its full sequence is Complement C1q subcomponent subunit B (253 aa).

The N-terminal stretch at 1–27 is a signal peptide; that stretch reads MMMKIPWGSIPVLMLLLLLGLIDISQA. Residue glutamine 28 is modified to Pyrrolidone carboxylic acid. Residues proline 35, proline 38, proline 41, proline 53, and proline 56 each carry the 4-hydroxyproline modification. 2 Collagen-like domains span residues 37–86 and 60–114; these read IPGI…PGNP and GEKG…GESG. The interval 38–115 is disordered; that stretch reads PGIPGIPGTP…APGPKGESGD (78 aa). 5-hydroxylysine occurs at positions 59 and 62. 4-hydroxyproline is present on proline 65. The segment covering 70 to 79 has biased composition (basic and acidic residues); sequence DHGEFGEKGD. At lysine 77 the chain carries 5-hydroxylysine. Over residues 80 to 92 the composition is skewed to low complexity; the sequence is PGIPGNPGKVGPK. Proline 83 and proline 86 each carry 4-hydroxyproline. 5-hydroxylysine is present on residues lysine 92 and lysine 98. Over residues 96–105 the composition is skewed to gly residues; that stretch reads GPKGGPGAPG. Residues proline 101, proline 104, and proline 107 each carry the 4-hydroxyproline modification. The residue at position 110 (lysine 110) is a 5-hydroxylysine. Positions 117-253 constitute a C1q domain; it reads KATQKIAFSA…GFLLFPDMEA (137 aa). Cysteines 181 and 198 form a disulfide. Ca(2+)-binding residues include aspartate 199, tyrosine 200, and glutamine 206.

In terms of assembly, core component of the complement C1 complex, a calcium-dependent complex composed of 1 molecule of the C1Q subcomplex, 2 molecules of C1R and 2 molecules of C1S. The C1Q subcomplex is composed 18 subunits: 3 chains of C1QA, C1QB, and C1QC trimerize to form 6 collagen-like triple helices connected to six globular ligand-recognition modules (C1q domain). Post-translationally, hydroxylated on lysine and proline residues. Hydroxylated lysine residues can be glycosylated. Human C1Q contains up to 68.3 hydroxylysine-galactosylglucose residues and up to 2.5 hydroxylysine-galactose per molecule. Total percentage hydroxylysine residues glycosylated is 86.4%.

It localises to the secreted. Its subcellular location is the cell surface. Its activity is regulated as follows. The C1Q subcomplex is inhibited by sulfated molecules, such as triterpenoid sulfates, heparan sulfate, or chondroitin sulfates. Core component of the complement C1 complex, a multiprotein complex that initiates the classical pathway of the complement system, a cascade of proteins that leads to phagocytosis and breakdown of pathogens and signaling that strengthens the adaptive immune system. The classical complement pathway is initiated by the C1Q subcomplex of the C1 complex, which specifically binds IgG or IgM immunoglobulins complexed with antigens, forming antigen-antibody complexes on the surface of pathogens: C1QA, together with C1QB and C1QC, specifically recognizes and binds the Fc regions of IgG or IgM via its C1q domain. Immunoglobulin-binding activates the proenzyme C1R, which cleaves C1S, initiating the proteolytic cascade of the complement system. The C1Q subcomplex is activated by a hexamer of IgG complexed with antigens, while it is activated by a pentameric IgM. The C1Q subcomplex also recognizes and binds phosphatidylserine exposed on the surface of cells undergoing programmed cell death, possibly promoting activation of the complement system. The protein is Complement C1q subcomponent subunit B of Homo sapiens (Human).